A 370-amino-acid polypeptide reads, in one-letter code: Chaperone protein DnaJ (370 aa).

In terms of domain architecture, J spans 4 to 68 (DYYQVLGVSK…QKRAAYDRFG (65 aa)). Residues 133 to 211 (GIEKNISFSS…CHGMGRYHKQ (79 aa)) form a CR-type zinc finger. The Zn(2+) site is built by C146, C149, C163, C166, C185, C188, C199, and C202. CXXCXGXG motif repeat units follow at residues 146 to 153 (CDTCHGTG), 163 to 170 (CDACGGVG), 185 to 192 (CHKCQGNG), and 199 to 206 (CKKCHGMG).

The protein belongs to the DnaJ family. Homodimer. Zn(2+) is required as a cofactor.

It is found in the cytoplasm. Its function is as follows. Participates actively in the response to hyperosmotic and heat shock by preventing the aggregation of stress-denatured proteins and by disaggregating proteins, also in an autonomous, DnaK-independent fashion. Unfolded proteins bind initially to DnaJ; upon interaction with the DnaJ-bound protein, DnaK hydrolyzes its bound ATP, resulting in the formation of a stable complex. GrpE releases ADP from DnaK; ATP binding to DnaK triggers the release of the substrate protein, thus completing the reaction cycle. Several rounds of ATP-dependent interactions between DnaJ, DnaK and GrpE are required for fully efficient folding. Also involved, together with DnaK and GrpE, in the DNA replication of plasmids through activation of initiation proteins. The sequence is that of Chaperone protein DnaJ from Rickettsia prowazekii (strain Madrid E).